Consider the following 237-residue polypeptide: Uridylate kinase (237 aa).

ATP is bound at residue 11–14 (KLSG). Gly-53 contacts UMP. 2 residues coordinate ATP: Gly-54 and Arg-58. UMP contacts are provided by residues Asp-73 and 134-141 (TGNPFFTT). Residues Thr-161, Tyr-167, and Asp-170 each contribute to the ATP site.

The protein belongs to the UMP kinase family. Homohexamer.

The protein localises to the cytoplasm. It catalyses the reaction UMP + ATP = UDP + ADP. It participates in pyrimidine metabolism; CTP biosynthesis via de novo pathway; UDP from UMP (UMPK route): step 1/1. Its activity is regulated as follows. Inhibited by UTP. Catalyzes the reversible phosphorylation of UMP to UDP. This chain is Uridylate kinase, found in Nitrosomonas eutropha (strain DSM 101675 / C91 / Nm57).